The sequence spans 459 residues: Cysteine--tRNA ligase (459 aa).

Residue cysteine 28 coordinates Zn(2+). A 'HIGH' region motif is present at residues 30-40 (VTIYDLCHIGH). Zn(2+) is bound by residues cysteine 209, histidine 234, and glutamate 238. A 'KMSKS' region motif is present at residues 266–270 (KMSKS). Lysine 269 is an ATP binding site.

Belongs to the class-I aminoacyl-tRNA synthetase family. Monomer. Zn(2+) serves as cofactor.

It is found in the cytoplasm. The catalysed reaction is tRNA(Cys) + L-cysteine + ATP = L-cysteinyl-tRNA(Cys) + AMP + diphosphate. The sequence is that of Cysteine--tRNA ligase from Shewanella amazonensis (strain ATCC BAA-1098 / SB2B).